Reading from the N-terminus, the 256-residue chain is MTDVARILKEARDQGRMTALDYASLIFDEFMELHGDRQFADDGSIVGGIAYLADQPVTVIGIQKGKNLQDNLARNFGQPHPEGYRKALRLMKQAEKFGRPVITFINTAGAYPGVGAEERGQGEAIARNLMEMSDLKVPIIAIIIGEGGSGGALALAVADQVWMLENTMYAVLSPEGFASILWKDGSRATEAAELMKITAAELYQMGVIDRIIPERGYFSSEIVEMIKLHLIDEITQLQAKPLEELLDQRYQRFRKY.

A CoA carboxyltransferase C-terminal domain is found at 1–236 (MTDVARILKE…KLHLIDEITQ (236 aa)).

Belongs to the AccA family. As to quaternary structure, acetyl-CoA carboxylase is a heterohexamer composed of biotin carboxyl carrier protein (AccB), biotin carboxylase (AccC) and two subunits each of ACCase subunit alpha (AccA) and ACCase subunit beta (AccD).

The protein localises to the cytoplasm. It catalyses the reaction N(6)-carboxybiotinyl-L-lysyl-[protein] + acetyl-CoA = N(6)-biotinyl-L-lysyl-[protein] + malonyl-CoA. The protein operates within lipid metabolism; malonyl-CoA biosynthesis; malonyl-CoA from acetyl-CoA: step 1/1. In terms of biological role, component of the acetyl coenzyme A carboxylase (ACC) complex. First, biotin carboxylase catalyzes the carboxylation of biotin on its carrier protein (BCCP) and then the CO(2) group is transferred by the carboxyltransferase to acetyl-CoA to form malonyl-CoA. The sequence is that of Acetyl-coenzyme A carboxylase carboxyl transferase subunit alpha from Streptococcus equi subsp. zooepidemicus (strain H70).